Reading from the N-terminus, the 104-residue chain is Phosphoribosyl-ATP pyrophosphatase (104 aa).

This sequence belongs to the PRA-PH family.

The protein resides in the cytoplasm. It catalyses the reaction 1-(5-phospho-beta-D-ribosyl)-ATP + H2O = 1-(5-phospho-beta-D-ribosyl)-5'-AMP + diphosphate + H(+). The protein operates within amino-acid biosynthesis; L-histidine biosynthesis; L-histidine from 5-phospho-alpha-D-ribose 1-diphosphate: step 2/9. The protein is Phosphoribosyl-ATP pyrophosphatase of Methanosarcina barkeri (strain Fusaro / DSM 804).